A 1088-amino-acid polypeptide reads, in one-letter code: RNA-directed RNA polymerase (1088 aa).

Positions 501–687 constitute a RdRp catalytic domain; sequence LSYGDVTRFL…AKRYIAGGKI (187 aa).

This sequence belongs to the reoviridae RNA-directed RNA polymerase family. Interacts with VP3 (Potential). Interacts with VP2; this interaction activates VP1. Interacts with NSP5; this interaction is probably necessary for the formation of functional virus factories. Interacts with NSP2; this interaction is weak. Mg(2+) is required as a cofactor.

It is found in the virion. It catalyses the reaction RNA(n) + a ribonucleoside 5'-triphosphate = RNA(n+1) + diphosphate. RNA-directed RNA polymerase that is involved in both transcription and genome replication. Together with VP3 capping enzyme, forms an enzyme complex positioned near the channels situated at each of the five-fold vertices of the core. Following infection, the outermost layer of the virus is lost, leaving a double-layered particle (DLP) made up of the core and VP6 shell. VP1 then catalyzes the transcription of fully conservative plus-strand genomic RNAs that are extruded through the DLP's channels into the cytoplasm where they function as mRNAs for translation of viral proteins. One copy of each of the viral (+)RNAs is also recruited during core assembly, together with newly synthesized polymerase complexes and VP2. The polymerase of these novo-formed particles catalyzes the synthesis of complementary minus-strands leading to dsRNA formation. To do so, the polymerase specifically recognizes and binds 4 bases 5'-UGUG-3' in the conserved 3'-sequence of plus-strand RNA templates. VP2 presumably activates the autoinhibited VP1-RNA complex to coordinate packaging and genome replication. Once dsRNA synthesis is complete, the polymerase switches to the transcriptional mode, thus providing secondary transcription. The sequence is that of RNA-directed RNA polymerase from Rotavirus A (strain RVA/Pig/United States/Gottfried/1983/G4P2B[6]) (RV-A).